The sequence spans 238 residues: Ribonuclease HII (238 aa).

Residues 23 to 215 enclose the RNase H type-2 domain; sequence QRLCGVDEAG…VREALARLPM (193 aa). Positions 29, 30, and 124 each coordinate a divalent metal cation.

The protein belongs to the RNase HII family. It depends on Mn(2+) as a cofactor. Requires Mg(2+) as cofactor.

It localises to the cytoplasm. It catalyses the reaction Endonucleolytic cleavage to 5'-phosphomonoester.. In terms of biological role, endonuclease that specifically degrades the RNA of RNA-DNA hybrids. This is Ribonuclease HII from Cupriavidus necator (strain ATCC 17699 / DSM 428 / KCTC 22496 / NCIMB 10442 / H16 / Stanier 337) (Ralstonia eutropha).